The chain runs to 315 residues: Atrochrysone carboxyl ACP thioesterase (315 aa).

4 residues coordinate Zn(2+): His95, His97, Asp99, and His100. Residue Asp99 is the Proton donor/acceptor of the active site.

Belongs to the metallo-beta-lactamase superfamily. The cofactor is Zn(2+). As to expression, endocrocin is specifically produced in conidia.

The enzyme catalyses atrochrysone carboxyl-[ACP] + H2O = atrochrysone carboxylate + holo-[ACP] + H(+). Its function is as follows. Atrochrysone carboxyl ACP thioesterase; part of the gene cluster that mediates the biosynthesis of endocrocin, a simple anthraquinone interesting for many biotechnological applications. The pathway begins with the synthesis of atrochrysone thioester by the polyketide synthase (PKS) encA. The atrochrysone carboxyl ACP thioesterase encB then breaks the thioester bond and releases the atrochrysone carboxylic acid from encA. The atrochrysone carboxylic acid is then converted to endocrocin anthrone which is further oxidized into endocrocin by the anthrone oxygenase encC. The exact function of encD has not been identified yet, but it negatively regulates endocrocin production, likely through the modification of endocrocin itself. This is Atrochrysone carboxyl ACP thioesterase from Aspergillus fumigatus (strain ATCC MYA-4609 / CBS 101355 / FGSC A1100 / Af293) (Neosartorya fumigata).